A 151-amino-acid chain; its full sequence is Small ribosomal subunit protein uS15 (151 aa).

The protein belongs to the universal ribosomal protein uS15 family.

The protein is Small ribosomal subunit protein uS15 (RpS13) of Choristoneura parallela (Spotted fireworm moth).